The chain runs to 507 residues: MTQAVKLASRVFHRIHLPLQLDASLGSRGSESVLRSLSDIPGPSTLSFLAELFCKGGLSRLHELQVHGAARYGPIWSGSFGTLRTVYVADPTLVEQLLRQESHCPERCSFSSWAEHRRRHQRACGLLTADGEEWQRLRSLLAPLLLRPQAAAGYAGTLDNVVRDLVRRLRRQRGRGSGLPGLVLDVAGEFYKFGLESIGAVLLGSRLGCLEAEVPPDTETFIHAVGSVFVSTLLTMAMPNWLHHLIPGPWARLCRDWDQMFAFAQRHVELREGEAAMRNQGKPEEDMPSGHHLTHFLFREKVSVQSIVGNVTELLLAGVDTVSNTLSWTLYELSRHPDVQTALHSEITAGTRGSCAHPHGTALSQLPLLKAVIKEVLRLYPVVPGNSRVPDRDIRVGNYVIPQDTLVSLCHYATSRDPTQFPDPNSFNPARWLGEGPTPHPFASLPFGFGKRSCIGRRLAELELQMALSQILTHFEVLPEPGALPIKPMTRTVLVPERSINLQFVDR.

C454 is a binding site for heme.

This sequence belongs to the cytochrome P450 family. It depends on heme as a cofactor. In terms of tissue distribution, kidney.

The protein resides in the mitochondrion membrane. The enzyme catalyses calcidiol + 2 reduced [adrenodoxin] + O2 + 2 H(+) = calcitriol + 2 oxidized [adrenodoxin] + H2O. The catalysed reaction is secalciferol + 2 reduced [adrenodoxin] + O2 + 2 H(+) = calcitetrol + 2 oxidized [adrenodoxin] + H2O. It carries out the reaction 25-hydroxy-24-oxocalciol + 2 reduced [adrenodoxin] + O2 + 2 H(+) = (1S)-1,25-dihydroxy-24-oxocalciol + 2 oxidized [adrenodoxin] + H2O. It catalyses the reaction 25-hydroxyvitamin D2 + 2 reduced [adrenodoxin] + O2 + 2 H(+) = 1alpha,25-dihydroxyvitamin D2 + 2 oxidized [adrenodoxin] + H2O. The protein operates within hormone biosynthesis; vitamin D biosynthesis. Its activity is regulated as follows. Activated by cardiolipin and dioleoyl phosphatidylethanolamine (DOPE), phospholipids found in the inner mitochondrial membrane. Inhibited by high substrate concentration. Its function is as follows. A cytochrome P450 monooxygenase involved in vitamin D metabolism and in calcium and phosphorus homeostasis. Catalyzes the rate-limiting step in the activation of vitamin D in the kidney, namely the hydroxylation of 25-hydroxyvitamin D3/calcidiol at the C1-alpha position to form the hormonally active form of vitamin D3, 1alpha,25-dihydroxyvitamin D3/calcitriol that acts via the vitamin D receptor (VDR). Has 1-alpha-hydroxylase activity on vitamin D intermediates of the CYP24A1-mediated inactivation pathway. Converts 24R,25-dihydroxyvitamin D3/secalciferol to 1-alpha,24,25-trihydroxyvitamin D3, an active ligand of VDR. Also active on 25-hydroxyvitamin D2. Mechanistically, uses molecular oxygen inserting one oxygen atom into a substrate, and reducing the second into a water molecule, with two electrons provided by NADPH via FDXR/adrenodoxin reductase and FDX1/adrenodoxin. The chain is 25-hydroxyvitamin D-1 alpha hydroxylase, mitochondrial (Cyp27b1) from Mus musculus (Mouse).